The sequence spans 174 residues: MDKVLNREESLQLMDLLGLERSAWGNIPLMRKAYLKKCKEFHPDKGGDEEKMKKMNTLYKKMEDGVKYAHQPDFGGFWDATEVFASSLNPGVDAMYCKQWPECAKKMSANCICLLCLLRMKHENRKLYRKDPLVWVDCYCFDCFRMWFGLDLCEGTLLLWCDIIGQTTYRDLKL.

N-acetylmethionine; by host is present on methionine 1. The J domain occupies 12–75 (QLMDLLGLER…VKYAHQPDFG (64 aa)). A C4-type; atypical zinc finger spans residues 103 to 116 (CAKKMSANCICLLC). An H1C3-type; atypical zinc finger spans residues 122-143 (HENRKLYRKDPLVWVDCYCFDC).

As to quaternary structure, interacts with host PPP2R1A; the interaction inhibits PP2A activity.

Its subcellular location is the host cytoplasm. The protein localises to the host nucleus. Promotes efficient viral genome replication by accelerating both G1 and S phase progression of the cell cycle. Inhibits host PP2A by binding to the A subunit, thereby displacing lower affinity regulatory B subunit. Inactivation of PP2A in turn results in the transactivation of cyclin A and cyclin D1 promoters. Late during the infection cycle, ST may induce dephosphorylation of host eIF4E-binding protein EIF4EBP1 leading to the inhibition of cap-dependent translation. May establish and maintain high levels of viral genomes during persistent infection in cell culture. The chain is Small t antigen from Simian virus 40 (SV40).